The chain runs to 1616 residues: Vitellogenin-1 (1616 aa).

Positions 1 to 19 are cleaved as a signal peptide; that stretch reads MRSIIIASIVALAIAFSPA. Residues 24-689 form the Vitellogenin domain; it reads FEPKIDYHYK…EKNSFLLKDL (666 aa). Asn-1270 is a glycosylation site (N-linked (GlcNAc...) asparagine). A VWFD domain is found at 1310–1479; the sequence is SVCKVQKNQI…SYLLKNEECE (170 aa). 2 disulfide bridges follow: Cys-1312–Cys-1442 and Cys-1334–Cys-1478. The span at 1505-1514 shows a compositional bias: acidic residues; it reads SFEETYDYEQ. The interval 1505-1531 is disordered; the sequence is SFEETYDYEQENTNKKQKNQRSQKKSD.

As to expression, expressed in the intestine of adult hermaphrodites.

The protein resides in the secreted. Functionally, precursor of the egg-yolk proteins that are sources of nutrients during embryonic development. Together with other vitellogenins, may play a role in modulating life-span, acting via induction of autophagy and lysosomal lipolysis. The protein is Vitellogenin-1 (vit-1) of Caenorhabditis elegans.